The following is a 194-amino-acid chain: MTIKLIVGLANPGAEYAATRHNAGAWYVDLLADRHRAPLREESKFFGYTSRINLAGEDVRLLVPTTFMNLSGKAVAAMATFYRINPDEILVAHDELDLPPGVAKFKLGGGHGGHNGLKDIISKLGNNPNFHRLRVGIGHPGDKNKVVGFVLGKPPASEQKLIDDAVDEAARCTEIWLKDGLTKATNRLHAFKAQ.

Residue Tyr16 participates in tRNA binding. His21 serves as the catalytic Proton acceptor. The tRNA site is built by Phe67, Asn69, and Asn115.

It belongs to the PTH family. Monomer.

The protein localises to the cytoplasm. It catalyses the reaction an N-acyl-L-alpha-aminoacyl-tRNA + H2O = an N-acyl-L-amino acid + a tRNA + H(+). Functionally, hydrolyzes ribosome-free peptidyl-tRNAs (with 1 or more amino acids incorporated), which drop off the ribosome during protein synthesis, or as a result of ribosome stalling. Its function is as follows. Catalyzes the release of premature peptidyl moieties from peptidyl-tRNA molecules trapped in stalled 50S ribosomal subunits, and thus maintains levels of free tRNAs and 50S ribosomes. The chain is Peptidyl-tRNA hydrolase from Klebsiella pneumoniae (strain 342).